We begin with the raw amino-acid sequence, 147 residues long: Large ribosomal subunit protein bL9 (147 aa).

This sequence belongs to the bacterial ribosomal protein bL9 family.

Its function is as follows. Binds to the 23S rRNA. The polypeptide is Large ribosomal subunit protein bL9 (Clostridium acetobutylicum (strain ATCC 824 / DSM 792 / JCM 1419 / IAM 19013 / LMG 5710 / NBRC 13948 / NRRL B-527 / VKM B-1787 / 2291 / W)).